Consider the following 1257-residue polypeptide: Neural cell adhesion molecule L1 (1257 aa).

A signal peptide spans 1–19; the sequence is MVVALRYVWPLLLCSPCLL. Residues 20–1120 lie on the Extracellular side of the membrane; that stretch reads IQIPEEYEGH…RLPPAGFATE (1101 aa). Ig-like C2-type domains lie at 35 to 125, 139 to 226, 240 to 328, 333 to 420, 425 to 507, and 518 to 607; these read PVIT…TAMS, PKET…EPID, PRLL…YYVT, PYWL…AYIY, PAKI…NNVT, and TQIT…AQLL. 2 disulfide bridges follow: C57–C114 and C158–C209. 4 N-linked (GlcNAc...) asparagine glycosylation sites follow: N100, N203, N247, and N294. 2 disulfides stabilise this stretch: C264-C312 and C354-C404. N433, N479, N490, and N505 each carry an N-linked (GlcNAc...) asparagine glycan. C448 and C497 form a disulfide bridge. C539 and C591 form a disulfide bridge. The Cell attachment site signature appears at 554 to 556; it reads RGD. 2 N-linked (GlcNAc...) asparagine glycosylation sites follow: N588 and N671. 5 Fibronectin type-III domains span residues 615–712, 717–810, 814–916, 920–1015, and 1016–1115; these read VPRL…TPEA, NPVD…SGED, AIPE…TPEG, HPEA…MALS, and GISD…LPPA. Residues 698 to 725 are disordered; the sequence is GEPSPVSETVVTPEAAPEKNPVDVKGEG. Residues 713 to 725 show a composition bias toward basic and acidic residues; that stretch reads APEKNPVDVKGEG. N-linked (GlcNAc...) asparagine glycosylation is found at N726, N777, N825, N849, N876, N979, N1022, N1030, N1071, and N1105. Residues 1121–1143 form a helical membrane-spanning segment; that stretch reads GWFIGFVSAIILLLLVLLILCFI. The Cytoplasmic segment spans residues 1144–1257; the sequence is KRSKGGKYSV…SPINPAVALE (114 aa). Residues S1163, T1172, R1177, and S1178 each carry the phosphoserine modification. Residues 1176–1187 show a composition bias toward basic and acidic residues; that stretch reads YRSLESDNEEKA. 2 disordered regions span residues 1176–1207 and 1226–1257; these read YRSL…SDDS and IGQY…VALE. S1181 is subject to Phosphoserine; by CaMK2. A phosphoserine mark is found at S1194, S1243, S1244, and S1248. Residues 1241–1250 show a composition bias toward polar residues; it reads NDSSGATSPI.

The protein belongs to the immunoglobulin superfamily. L1/neurofascin/NgCAM family. As to quaternary structure, interacts with SHTN1; the interaction occurs in axonal growth cones. Interacts with isoform 2 of BSG.

It localises to the cell membrane. Its subcellular location is the cell projection. The protein resides in the growth cone. It is found in the axon. The protein localises to the dendrite. Neural cell adhesion molecule involved in the dynamics of cell adhesion and in the generation of transmembrane signals at tyrosine kinase receptors. During brain development, critical in multiple processes, including neuronal migration, axonal growth and fasciculation, and synaptogenesis. In the mature brain, plays a role in the dynamics of neuronal structure and function, including synaptic plasticity. The sequence is that of Neural cell adhesion molecule L1 (L1CAM) from Homo sapiens (Human).